Consider the following 107-residue polypeptide: Phosphoribosyl-ATP pyrophosphatase (107 aa).

This sequence belongs to the PRA-PH family.

The protein resides in the cytoplasm. It catalyses the reaction 1-(5-phospho-beta-D-ribosyl)-ATP + H2O = 1-(5-phospho-beta-D-ribosyl)-5'-AMP + diphosphate + H(+). The protein operates within amino-acid biosynthesis; L-histidine biosynthesis; L-histidine from 5-phospho-alpha-D-ribose 1-diphosphate: step 2/9. The sequence is that of Phosphoribosyl-ATP pyrophosphatase from Bacillus cereus (strain Q1).